A 219-amino-acid polypeptide reads, in one-letter code: Histone H1.4 (219 aa).

Low complexity predominate over residues 1-15; it reads MSETAPAAPAAPAPA. Positions 1 to 41 are disordered; that stretch reads MSETAPAAPAAPAPAEKTPVKKKARKAAGGAKRKTSGPPVS. Residue serine 2 is modified to N-acetylserine. Serine 2 carries the post-translational modification Phosphoserine. Residue lysine 17 is modified to N6-acetyllysine. Threonine 18 is modified (phosphothreonine). The span at 20–35 shows a compositional bias: basic residues; that stretch reads VKKKARKAAGGAKRKT. Lysine 26 carries the post-translational modification N6-acetyllysine; alternate. N6-methyllysine; alternate is present on lysine 26. Residue lysine 34 is modified to N6-(beta-hydroxybutyryl)lysine; alternate. Lysine 34 bears the N6-succinyllysine; alternate mark. At serine 36 the chain carries Phosphoserine. An H15 domain is found at 36–109; sequence SGPPVSELIT…GASGSFKLNK (74 aa). N6-(beta-hydroxybutyryl)lysine is present on lysine 52. Position 54 is a citrulline (arginine 54). Lysine 64, lysine 85, lysine 90, and lysine 106 each carry N6-(beta-hydroxybutyryl)lysine. The tract at residues 92 to 219 is disordered; sequence TLVQTKGTGA…KPKKTAAKKK (128 aa). The span at 119-140 shows a compositional bias: basic residues; sequence KAKRAGAAKAKKPAGAAKKPKK. Threonine 146 bears the Phosphothreonine mark. Composition is skewed to basic residues over residues 149-160 and 168-185; these read KSTKKTPKKAKK and KKAK…KKAP. An ADP-ribosylserine modification is found at serine 150. Serine 187 is subject to Phosphoserine. The segment covering 192–219 has biased composition (basic residues); it reads KTVKPKAAKPKTSKPKAAKPKKTAAKKK.

Belongs to the histone H1/H5 family. Citrullination at Arg-54 (H1R54ci) by PADI4 takes place within the DNA-binding site of H1 and results in its displacement from chromatin and global chromatin decondensation, thereby promoting pluripotency and stem cell maintenance. In terms of processing, ADP-ribosylated on Ser-55, Ser-113 and Ser-150 in response to DNA damage. Post-translationally, H1 histones are progressively phosphorylated during the cell cycle, becoming maximally phosphorylated during late G2 phase and M phase, and being dephosphorylated sharply thereafter. Acetylated at Lys-26. Deacetylated at Lys-26 by SIRT1. In terms of processing, hydroxybutyrylation of histones is induced by starvation.

It localises to the nucleus. The protein resides in the chromosome. Histone H1 protein binds to linker DNA between nucleosomes forming the macromolecular structure known as the chromatin fiber. Histones H1 are necessary for the condensation of nucleosome chains into higher-order structured fibers. Also acts as a regulator of individual gene transcription through chromatin remodeling, nucleosome spacing and DNA methylation. This is Histone H1.4 from Mus musculus (Mouse).